Here is a 929-residue protein sequence, read N- to C-terminus: Urea transporter 2 (929 aa).

Positions 1 to 11 (MSDHPLKEMSD) are enriched in basic and acidic residues. The tract at residues 1-89 (MSDHPLKEMS…KRRESELPRR (89 aa)) is disordered. The span at 31–42 (SELSSPTWPSSS) shows a compositional bias: low complexity. Positions 55–88 (PEEKDLRSSDEDSHIVKIEKPNERSKRRESELPR) are enriched in basic and acidic residues. 9 helical membrane-spanning segments follow: residues 133–155 (GAAQ…GLLI), 162–179 (IAGA…LALS), 184–204 (AIAS…VAVF), 212–232 (WWLL…SSAL), 241–261 (LPVF…ATGH), 310–330 (GGVI…HAAI), 349–371 (IYTG…MFYV), 378–399 (LLAL…NMMA), and 400–420 (VVGV…FLLL). Residues 451–480 (SDEQKPPNGGGGEQSHGGGQRKAEEGSETV) form a disordered region. The span at 458–470 (NGGGGEQSHGGGQ) shows a compositional bias: gly residues. A Phosphoserine modification is found at S486. 4 helical membrane-spanning segments follow: residues 609–629 (GILI…SGCL), 647–667 (AIAA…MAVF), 675–695 (WWLL…SSAL), and 704–724 (LPVF…ATGH). N-linked (GlcNAc...) asparagine glycosylation is present at N742. The next 4 membrane-spanning stretches (helical) occupy residues 773-793 (GGIF…HAAI), 812-832 (IYFG…GGMF), 841-861 (LLAI…ANML), and 863-883 (VFGL…FLLL).

This sequence belongs to the urea transporter family. As to quaternary structure, interacts with SNAPIN which enhances its urea transport activity. In terms of tissue distribution, expressed in the inner medulla of the kidney. Expressed in both the inner and outer renal medulla of the kidney.

The protein resides in the apical cell membrane. Its subcellular location is the cell membrane. It carries out the reaction urea(in) = urea(out). With respect to regulation, inhibited by phloretin. Activated by vasopressin, forskolin, 3-isobutyl-1-methylxanthine (IBMX) and cAMP. Its activity is regulated as follows. Inhibited by phloretin. Inhibited by urea analogs and phloretin and activated by forskolin. With respect to regulation, inhibited by phloretin and activated by forskolin. In terms of biological role, mediates the transport of urea driven by a concentration gradient across the cell membrane of the kidney inner medullary collecting duct which is critical to the urinary concentrating mechanism. This is Urea transporter 2 (Slc14a2) from Rattus norvegicus (Rat).